Consider the following 377-residue polypeptide: Cell division cycle-associated protein 7 (377 aa).

Disordered regions lie at residues 58-113 and 144-211; these read RTRS…EEDG and IFSG…EEDK. The span at 76–100 shows a compositional bias: low complexity; the sequence is PARNTRRAANTKAAPPKPSESSAND. The tract at residues 148–173 is interaction with MYC; that stretch reads RHSLPGHRTKDSKSPRRRTFPGVASR. The Nuclear localization signal signature appears at 163 to 179; that stretch reads RRRTFPGVASRRNPERR. Threonine 166 is subject to Phosphothreonine. At serine 193 the chain carries Phosphoserine. Threonine 199 carries the phosphothreonine modification. The span at 199–210 shows a compositional bias: acidic residues; sequence TEEEEDEEEEED. Residue lysine 211 forms a Glycyl lysine isopeptide (Lys-Gly) (interchain with G-Cter in SUMO2) linkage. A Phosphoserine modification is found at serine 220. The mediates transcriptional activity stretch occupies residues 253-377; sequence EEEIRNICSN…SLKQEFEMQA (125 aa).

As to quaternary structure, interacts with MYC (via C-terminus), YWHAE and YWHAZ. In terms of processing, phosphorylation at Thr-166 promotes interaction with YWHAE and YWHAZ, dissociation from MYC and sequestration in the cytoplasm.

It is found in the nucleus. The protein localises to the cytoplasm. In terms of biological role, participates in MYC-mediated cell transformation and apoptosis; induces anchorage-independent growth and clonogenicity in lymphoblastoid cells. Insufficient to induce tumorigenicity when overexpressed but contributes to MYC-mediated tumorigenesis. May play a role as transcriptional regulator. The sequence is that of Cell division cycle-associated protein 7 (Cdca7) from Rattus norvegicus (Rat).